A 189-amino-acid polypeptide reads, in one-letter code: Protein GrpE (189 aa).

A compositionally biased stretch (basic and acidic residues) spans 1–38 (MTKSNETERMEESEETHSSDIRSASESDHASGSDHTES). Residues 1–54 (MTKSNETERMEESEETHSSDIRSASESDHASGSDHTESADEIPTADAEQGELEQ) are disordered.

This sequence belongs to the GrpE family. Homodimer.

It is found in the cytoplasm. Participates actively in the response to hyperosmotic and heat shock by preventing the aggregation of stress-denatured proteins, in association with DnaK and GrpE. It is the nucleotide exchange factor for DnaK and may function as a thermosensor. Unfolded proteins bind initially to DnaJ; upon interaction with the DnaJ-bound protein, DnaK hydrolyzes its bound ATP, resulting in the formation of a stable complex. GrpE releases ADP from DnaK; ATP binding to DnaK triggers the release of the substrate protein, thus completing the reaction cycle. Several rounds of ATP-dependent interactions between DnaJ, DnaK and GrpE are required for fully efficient folding. The protein is Protein GrpE of Tropheryma whipplei (strain TW08/27) (Whipple's bacillus).